Reading from the N-terminus, the 68-residue chain is Protein transport protein Sec61 subunit gamma (68 aa).

At 1–32 the chain is on the cytoplasmic side; sequence MDQIMQFVEPSRQFVKDSIRLVKRCTKPDRKE. A helical membrane pass occupies residues 33 to 61; it reads FQKIAMATAIGFAIMGFIGFFVKLIHIPI. Topologically, residues 62–68 are extracellular; sequence NNIIVGG.

Belongs to the SecE/SEC61-gamma family. As to quaternary structure, the SEC61 channel-forming translocon complex consists of channel-forming core components SEC61A1, SEC61B and SEC61G and different auxiliary components such as SEC62 and SEC63. The SEC61 channel associates with the multi-pass translocon (MPT) complex.

It localises to the endoplasmic reticulum membrane. Functionally, component of SEC61 channel-forming translocon complex that mediates transport of signal peptide-containing precursor polypeptides across the endoplasmic reticulum (ER). Forms a ribosome receptor and a gated pore in the ER membrane, both functions required for cotranslational translocation of nascent polypeptides. The SEC61 channel is also involved in ER membrane insertion of transmembrane proteins: it mediates membrane insertion of the first few transmembrane segments of proteins, while insertion of subsequent transmembrane regions of multi-pass membrane proteins is mediated by the multi-pass translocon (MPT) complex. The chain is Protein transport protein Sec61 subunit gamma (sec61g) from Gadus morhua (Atlantic cod).